Reading from the N-terminus, the 234-residue chain is Large ribosomal subunit protein uL1 (234 aa).

The protein belongs to the universal ribosomal protein uL1 family. In terms of assembly, part of the 50S ribosomal subunit.

In terms of biological role, binds directly to 23S rRNA. The L1 stalk is quite mobile in the ribosome, and is involved in E site tRNA release. Protein L1 is also a translational repressor protein, it controls the translation of the L11 operon by binding to its mRNA. The chain is Large ribosomal subunit protein uL1 from Corynebacterium aurimucosum (strain ATCC 700975 / DSM 44827 / CIP 107346 / CN-1) (Corynebacterium nigricans).